A 334-amino-acid polypeptide reads, in one-letter code: Desumoylating isopeptidase 1 homolog (334 aa).

The PPPDE domain maps to 30–174; that stretch reads TVVRLNVYDM…FLEKCIPQEW (145 aa). Active-site residues include histidine 55 and cysteine 133. Over residues 310–325 the composition is skewed to polar residues; sequence SNIGKTNSTPGTTSNG. The segment at 310 to 334 is disordered; that stretch reads SNIGKTNSTPGTTSNGLAKPTCSEC.

Belongs to the DeSI family. As to expression, expressed in the pharynx, hypodermis, intestine, head neuron and tail neuron.

Its subcellular location is the cytoplasm. It localises to the nucleus. In terms of biological role, protease which deconjugates SUMO from some substrate proteins. Has isopeptidase but not SUMO-processing activity. Collaborates with ubql-1 in the export of ubiquitinated proteins from the nucleus to the cytoplasm. In Caenorhabditis elegans, this protein is Desumoylating isopeptidase 1 homolog.